A 326-amino-acid chain; its full sequence is MKKNYYALAYYYLTRVDNPQQEIALHKELFKDLDVSCRIYISEQGINGQFSGYQPDAEYYMNWLRQRPGFSNVKFKIHHIEENIFPRVTVKYRKELVALGCDVDLSNQGKHISPQEWHEKLEENRCLVLDVRNNYEWKIGHFENAVLPDIRTFREFPDYAEQLSKEHDPATTPVMMYCTGGIRCELYSSLLLEKGFKEVYQLDGGVIAYGQAVGTGKWRGKLFVFDDRLAVPIDEADTDVPPIASCSHCETPCDTYYNCANTDCNNLFICCKECIHSTKGCCSQECSQAPRIRSFAPCRGNKPFRRMHLCEVTKEKEEAASSCCLH.

The 97-residue stretch at 122 to 218 (EENRCLVLDV…YGQAVGTGKW (97 aa)) folds into the Rhodanese domain. The active-site Cysteine persulfide intermediate is the Cys-178.

It belongs to the TrhO family.

It carries out the reaction uridine(34) in tRNA + AH2 + O2 = 5-hydroxyuridine(34) in tRNA + A + H2O. In terms of biological role, catalyzes oxygen-dependent 5-hydroxyuridine (ho5U) modification at position 34 in tRNAs. In Chlamydia abortus (strain DSM 27085 / S26/3) (Chlamydophila abortus), this protein is tRNA uridine(34) hydroxylase.